A 106-amino-acid chain; its full sequence is uncharacterized protein (106 aa).

Disordered stretches follow at residues 27 to 47 (FSDS…DVSD) and 83 to 106 (SPAM…VQSK). The span at 29 to 39 (DSEDEPDDEAS) shows a compositional bias: acidic residues. Basic and acidic residues predominate over residues 94–106 (GIEREDRGGVQSK).

It is found in the mitochondrion. This is an uncharacterized protein from Arabidopsis thaliana (Mouse-ear cress).